We begin with the raw amino-acid sequence, 1176 residues long: MAERKGTAKVDFLKKIEKEIQQKWDTERVFEVNASSLEKQTSKGKYFVTFPYPYMNGRLHLGHTFSLSKCEFAVGYQRLKGKCCLFPFGLHCTGMPIKACADKLKREIELYGCPPDFPDEEDEEEETNVKTEDTRIKDKAKGKKSKAAAKAGSSKYQWGIMKSLGLSDEEIVKFSEAEHWLDYFPPLAIQDLKRLGLKVDWRRSFITTDVNPYYDSFVRWQFLTLRERNKIKFGKRYTIYSPKDGQPCMDHDRQTGEGVGPQEYTLLKLKVLEPYPSKLSGLKGKNIFLVAATLRPETLFGQTNCWVRPDMKYIGFETVNGDIFICTQKAARNMSYQGFTKDNGVVPVVKELMGEEILGASLSAPLTSYKVIYVLPMLTIKEDKGTGVVTSVPSDSPDDIAALRDLKKKQALRAKYGIRDDMVLPFEPVPVIEIPGFGNLSAVTICDELKIQSQNDREKLAEAKEKIYLKGFYEGIMLVDGFKGQKVQDVKKTIQKKMIDAGDALIYMEPEKQVMSRSSDECVVALCDQWYLDYGEENWKKQTSQCLKNLETFCEETRRNFEATLGWLQEHACSRTYGLGTHLPWDEQWLIESLSDSTIYMAFYTVAHLLQGGNLHGQAESPLGIRPQQMTKEVWDYVFFKEAPFPKTQIAKEKLDQLKQEFEFWYPVDLRVSGKDLVPNHLSYYLYNHVAMWPEQSDKWPTAVRANGHLLLNSEKMSKSTGNFLTLTQAIDKFSADGMRLALADAGDTVEDANFVEAMADAGILRLYTWVEWVKEMVANWDSLRSGPANTFNDRVFASELNAGIIKTDQNYEKMMFKEALKTGFFEFQAAKDKYRELAVEGMHRELVFRFIEVQTLLLAPFCPHLCEHIWTLLGKPDSIMNASWPVAGPVDEVLIHSSQYLMEVTHDLRLRLKNYMMPAKGKKTDKQPLQKPSHCTIYVAKNYPPWQHTTLSVLRKHFEANNRKLPDNKVIASELGSMPELKKYMKKVMPFVAMIKENLEKMGPRILDLQLEFDEKAVLMENIVYLTNSLELEHIEVKFASEAEDKIREDCCPGKPLNVFRIEPGVSISLVNPQPSNGHFSTKIEIRQGDNCDSIIRRLMKMNRGIKDLSKVKLMRFDDPLLGPRRVPVLGKEHTEKTPISEHAVFNVDLMSKKIHLTENGIRVDIGDTIIYLVH.

The L-leucine site is built by tyrosine 52 and tyrosine 54. A 'HIGH' region motif is present at residues 60–63 (HLGH). The tract at residues 115-142 (PDFPDEEDEEEETNVKTEDTRIKDKAKG) is disordered. Positions 117–126 (FPDEEDEEEE) are enriched in acidic residues. The span at 127-139 (TNVKTEDTRIKDK) shows a compositional bias: basic and acidic residues. Residue serine 167 is modified to Phosphoserine. The segment at 260–509 (GPQEYTLLKL…DAGDALIYME (250 aa)) is editing domain. Residues leucine 594 and serine 597 each coordinate L-leucine. A 'KMSKS' region motif is present at residues 716–720 (KMSKS). ATP is bound at residue lysine 719. Serine 720 is subject to Phosphoserine. An N6-acetyllysine mark is found at lysine 970 and lysine 1047.

This sequence belongs to the class-I aminoacyl-tRNA synthetase family.

It localises to the cytoplasm. It catalyses the reaction tRNA(Leu) + L-leucine + ATP = L-leucyl-tRNA(Leu) + AMP + diphosphate. It carries out the reaction L-methionyl-tRNA(Leu) + H2O = tRNA(Leu) + L-methionine + H(+). 5-fluoro-1,3-dihydro-1-hydroxy-1,2-benzoxaborole inhibits LARS1 by forming a covalent adduct with the 3' adenosine of tRNA(Leu) at the editing site, thus locking the enzyme in an inactive conformation. In terms of biological role, aminoacyl-tRNA synthetase that catalyzes the specific attachment of leucine to its cognate tRNA (tRNA(Leu)). It performs tRNA aminoacylation in a two-step reaction: Leu is initially activated by ATP to form a leucyl-adenylate (Leu-AMP) intermediate; then the leucyl moiety is transferred to the acceptor 3' end of the tRNA to yield leucyl-tRNA. To improve the fidelity of catalytic reactions, it is also able to hydrolyze misactivated aminoacyl-adenylate intermediates (pre-transfer editing) and mischarged aminoacyl-tRNAs (post-transfer editing). In Pongo abelii (Sumatran orangutan), this protein is Leucine--tRNA ligase, cytoplasmic (LARS1).